A 258-amino-acid chain; its full sequence is Large ribosomal subunit protein bL28m (258 aa).

A mitochondrion-targeting transit peptide spans 1 to 21 (MQKIFRPFQLTRGFTSSVKNF).

This sequence belongs to the bacterial ribosomal protein bL28 family. As to quaternary structure, component of the mitochondrial large ribosomal subunit (mt-LSU). Mature yeast 74S mitochondrial ribosomes consist of a small (37S) and a large (54S) subunit. The 37S small subunit contains a 15S ribosomal RNA (15S mt-rRNA) and 34 different proteins. The 54S large subunit contains a 21S rRNA (21S mt-rRNA) and 46 different proteins.

The protein resides in the mitochondrion. Component of the mitochondrial ribosome (mitoribosome), a dedicated translation machinery responsible for the synthesis of mitochondrial genome-encoded proteins, including at least some of the essential transmembrane subunits of the mitochondrial respiratory chain. The mitoribosomes are attached to the mitochondrial inner membrane and translation products are cotranslationally integrated into the membrane. The protein is Large ribosomal subunit protein bL28m (MRPL24) of Saccharomyces cerevisiae (strain ATCC 204508 / S288c) (Baker's yeast).